The sequence spans 297 residues: ER membrane protein complex subunit 2 (297 aa).

Residue Ala2 is modified to N-acetylalanine. 3 TPR repeats span residues 87–120 (HRVKRLTGMRFEAMERYDDAIQLYDRILQEDPTN), 155–188 (QEAWHELAELYINEHDYAKAAFCLEELMMTNPHN), and 192–225 (CQQYAEVKYTQGGLENLELSRKYFAQALKLNNRN). Lys255 carries the post-translational modification N6-acetyllysine.

Belongs to the EMC2 family. As to quaternary structure, component of the ER membrane protein complex (EMC). Interacts with WNK1 (via amphipathic alpha-helix region); promoting the ER membrane protein complex assembly by preventing EMC2 ubiquitination. Post-translationally, ubiquitinated when soluble in the cytoplasm, leading to its degradation by the proteasome. Interaction with EMC2 prevents its ubiquitination and degradation.

Its subcellular location is the endoplasmic reticulum membrane. Functionally, part of the endoplasmic reticulum membrane protein complex (EMC) that enables the energy-independent insertion into endoplasmic reticulum membranes of newly synthesized membrane proteins. Preferentially accommodates proteins with transmembrane domains that are weakly hydrophobic or contain destabilizing features such as charged and aromatic residues. Involved in the cotranslational insertion of multi-pass membrane proteins in which stop-transfer membrane-anchor sequences become ER membrane spanning helices. It is also required for the post-translational insertion of tail-anchored/TA proteins in endoplasmic reticulum membranes. By mediating the proper cotranslational insertion of N-terminal transmembrane domains in an N-exo topology, with translocated N-terminus in the lumen of the ER, controls the topology of multi-pass membrane proteins like the G protein-coupled receptors. By regulating the insertion of various proteins in membranes, it is indirectly involved in many cellular processes. The protein is ER membrane protein complex subunit 2 of Homo sapiens (Human).